A 729-amino-acid polypeptide reads, in one-letter code: Catalase-peroxidase (729 aa).

The segment at 1-33 is disordered; it reads MSAHNTNESAVGKCPFHEQKEEKSVLARGAGGG. Positions 15-25 are enriched in basic and acidic residues; it reads PFHEQKEEKSV. The tryptophyl-tyrosyl-methioninium (Trp-Tyr) (with M-255) cross-link spans 108–229; the sequence is WHSAGTYRTV…LGATEMGLIY (122 aa). The active-site Proton acceptor is the histidine 109. The tryptophyl-tyrosyl-methioninium (Tyr-Met) (with W-108) cross-link spans 229-255; sequence YVNPEGPEASGNPASAAPAIRATFGNM. Histidine 270 is a binding site for heme b.

This sequence belongs to the peroxidase family. Peroxidase/catalase subfamily. Homodimer or homotetramer. Heme b serves as cofactor. In terms of processing, formation of the three residue Trp-Tyr-Met cross-link is important for the catalase, but not the peroxidase activity of the enzyme.

It carries out the reaction H2O2 + AH2 = A + 2 H2O. The enzyme catalyses 2 H2O2 = O2 + 2 H2O. In terms of biological role, bifunctional enzyme with both catalase and broad-spectrum peroxidase activity. The chain is Catalase-peroxidase from Erwinia tasmaniensis (strain DSM 17950 / CFBP 7177 / CIP 109463 / NCPPB 4357 / Et1/99).